Consider the following 268-residue polypeptide: Putative esterase/lipase 1 (268 aa).

Residue H27 is part of the active site. S94 functions as the Charge relay system in the catalytic mechanism.

This sequence belongs to the lipase/esterase LIP3/BchO family.

This Mycoplasma genitalium (strain ATCC 33530 / DSM 19775 / NCTC 10195 / G37) (Mycoplasmoides genitalium) protein is Putative esterase/lipase 1.